Reading from the N-terminus, the 376-residue chain is uncharacterized protein (376 aa).

Over 1–280 (MPIPIIAHIA…RTPGFRRVVS (280 aa)) the chain is Lumenal. 6 residues coordinate NADP(+): isoleucine 66, aspartate 115, arginine 178, lysine 233, valine 270, and threonine 272. Lysine 233 serves as the catalytic Lowers pKa of active site Tyr. Residues 281 to 301 (FGKVWGLFLYLLLWPFWWLLL) form a helical membrane-spanning segment. Topologically, residues 302 to 376 (KGTIHGAQSF…KKKKIKKSKK (75 aa)) are cytoplasmic.

This sequence belongs to the short-chain dehydrogenases/reductases (SDR) family.

Its subcellular location is the cytoplasm. The protein localises to the endoplasmic reticulum membrane. In terms of biological role, may be involved in lipid metabolism. This is an uncharacterized protein from Schizosaccharomyces pombe (strain 972 / ATCC 24843) (Fission yeast).